The following is an 87-amino-acid chain: UPF0473 protein PTH_1066 (87 aa).

This sequence belongs to the UPF0473 family.

This is UPF0473 protein PTH_1066 from Pelotomaculum thermopropionicum (strain DSM 13744 / JCM 10971 / SI).